Reading from the N-terminus, the 599-residue chain is Sulfite reductase [NADPH] flavoprotein alpha-component (599 aa).

Residues 64–202 (VTLISASQTG…AASEWRARVV (139 aa)) enclose the Flavodoxin-like domain. FMN-binding positions include 70–75 (SQTGNA), 117–120 (STQG), and 153–162 (LGDTSYEFFC). In terms of domain architecture, FAD-binding FR-type spans 234–448 (DAPLTATLSV…IEHNDNFRLP (215 aa)). FAD-binding positions include threonine 322, alanine 356, 386 to 389 (RLYS), 404 to 406 (TVG), tyrosine 410, and 419 to 422 (GGAS). NADP(+) is bound by residues 519–520 (SR), 525–529 (KIYVQ), and aspartate 561. Residue tyrosine 599 participates in FAD binding.

This sequence belongs to the NADPH-dependent sulphite reductase flavoprotein subunit CysJ family. In the N-terminal section; belongs to the flavodoxin family. It in the C-terminal section; belongs to the flavoprotein pyridine nucleotide cytochrome reductase family. In terms of assembly, alpha(8)-beta(8). The alpha component is a flavoprotein, the beta component is a hemoprotein. The cofactor is FAD. FMN serves as cofactor.

The catalysed reaction is hydrogen sulfide + 3 NADP(+) + 3 H2O = sulfite + 3 NADPH + 4 H(+). The protein operates within sulfur metabolism; hydrogen sulfide biosynthesis; hydrogen sulfide from sulfite (NADPH route): step 1/1. Functionally, component of the sulfite reductase complex that catalyzes the 6-electron reduction of sulfite to sulfide. This is one of several activities required for the biosynthesis of L-cysteine from sulfate. The flavoprotein component catalyzes the electron flow from NADPH -&gt; FAD -&gt; FMN to the hemoprotein component. The protein is Sulfite reductase [NADPH] flavoprotein alpha-component of Salmonella paratyphi A (strain ATCC 9150 / SARB42).